A 512-amino-acid polypeptide reads, in one-letter code: GMP synthase [glutamine-hydrolyzing] (512 aa).

Positions 3-196 (NILILDFGSQ…VKHICQASET (194 aa)) constitute a Glutamine amidotransferase type-1 domain. Catalysis depends on C80, which acts as the Nucleophile. Active-site residues include H169 and E171. Residues 197–387 (WKIETIEKQL…LGLPDVLISR (191 aa)) form the GMPS ATP-PPase domain. 225 to 231 (SGGVDSS) provides a ligand contact to ATP.

In terms of assembly, homodimer.

The enzyme catalyses XMP + L-glutamine + ATP + H2O = GMP + L-glutamate + AMP + diphosphate + 2 H(+). It functions in the pathway purine metabolism; GMP biosynthesis; GMP from XMP (L-Gln route): step 1/1. Catalyzes the synthesis of GMP from XMP. The chain is GMP synthase [glutamine-hydrolyzing] from Chlamydia caviae (strain ATCC VR-813 / DSM 19441 / 03DC25 / GPIC) (Chlamydophila caviae).